Here is a 136-residue protein sequence, read N- to C-terminus: DNA-directed RNA polymerase subunit omega (136 aa).

The disordered stretch occupies residues glutamate 81–aspartate 136. The segment covering glutamate 83–proline 99 has biased composition (low complexity). The span at glutamine 109–arginine 120 shows a compositional bias: basic and acidic residues.

The protein belongs to the RNA polymerase subunit omega family. The RNAP catalytic core consists of 2 alpha, 1 beta, 1 beta' and 1 omega subunit. When a sigma factor is associated with the core the holoenzyme is formed, which can initiate transcription.

The catalysed reaction is RNA(n) + a ribonucleoside 5'-triphosphate = RNA(n+1) + diphosphate. Promotes RNA polymerase assembly. Latches the N- and C-terminal regions of the beta' subunit thereby facilitating its interaction with the beta and alpha subunits. The chain is DNA-directed RNA polymerase subunit omega from Methylobacterium nodulans (strain LMG 21967 / CNCM I-2342 / ORS 2060).